A 266-amino-acid chain; its full sequence is MNYLEGVGSKKGGGGIASESQFNLQRRKEVESLLSKGENVPYTFQDEKDDQVRSNPYIYKNHSGKLVCKLCNTMHMSWSSVERHLGGKKHGLNVLRRGISIEKSSLGREGQTTHDFRQQQKIIEAKQSLKNNGTIPVCKIATVKNPKNGSVGLAIQVNYSSEVKENSVDSDDKAKVPPLIRIVSGLELSDTKQKGKKFLVIAYEPFENIAIELPPNEILFSENNDMDNNNDGVDELNKKCTFWDAISKLYYVQFFFKQAEQEQADV.

Residues 1–21 form a disordered region; it reads MNYLEGVGSKKGGGGIASESQ. The Matrin-type zinc finger occupies 66 to 96; it reads LVCKLCNTMHMSWSSVERHLGGKKHGLNVLR.

This sequence belongs to the SF3A2 family. In terms of assembly, belongs to the CWC complex (or CEF1-associated complex), a spliceosome sub-complex reminiscent of a late-stage spliceosome composed of the U2, U5 and U6 snRNAs and at least BUD13, BUD31, BRR2, CDC40, CEF1, CLF1, CUS1, CWC2, CWC15, CWC21, CWC22, CWC23, CWC24, CWC25, CWC27, ECM2, HSH155, IST3, ISY1, LEA1, MSL1, NTC20, PRP8, PRP9, PRP11, PRP19, PRP21, PRP22, PRP45, PRP46, SLU7, SMB1, SMD1, SMD2, SMD3, SMX2, SMX3, SNT309, SNU114, SPP2, SYF1, SYF2, RSE1 and YJU2. Interacts with CUS2.

Its subcellular location is the nucleus. MRNA splicing factors, PRP9, PRP11, and PRP21, are necessary for addition of the U2 snRNP to the pre-mRNA in an early step of spliceosome assembly. This is Pre-mRNA-splicing factor PRP11 (PRP11) from Saccharomyces cerevisiae (strain ATCC 204508 / S288c) (Baker's yeast).